The chain runs to 245 residues: P2Y purinoceptor 13 (245 aa).

Topologically, residues 1–9 are extracellular; the sequence is QLRAFVCRL. A disulfide bond links C7 and C85. A helical membrane pass occupies residues 10–30; that stretch reads SSVIFYETMYVGIVLLGLIAF. Residues 31–35 are Cytoplasmic-facing; that stretch reads DRFLK. A helical transmembrane segment spans residues 36-56; that stretch reads IIRPLRNIFLKKTVFAKTVSV. Residues 57–85 lie on the Extracellular side of the membrane; it reads FIWSFFFFISLPNMILSNKEATPSSVKKC. Residues 86–106 form a helical membrane-spanning segment; sequence ASLKGPLGLKWHQIVNNISQF. The Cytoplasmic portion of the chain corresponds to 107 to 126; it reads IFWTVFVLMLVFYVVIAKKV. A helical transmembrane segment spans residues 127–147; it reads YDSYRKSKSKDRKNNKKLEGK. Residues 148 to 174 lie on the Extracellular side of the membrane; sequence VFVVVAVFFVCFAPFHFTRVPYTYSQT. Residues 175-195 traverse the membrane as a helical segment; the sequence is NNKTDCRLQNQLFIAKETTLF. Over 196 to 245 the chain is Cytoplasmic; that stretch reads LAATNICMDPLIYIFLCKKFTEKLPCMRGRKTIASSQENQSSQTDNITLG.

Belongs to the G-protein coupled receptor 1 family.

The protein localises to the cell membrane. In terms of biological role, receptor for ADP. Coupled to G(i)-proteins. May play a role in hematopoiesis and the immune system. In Macaca fascicularis (Crab-eating macaque), this protein is P2Y purinoceptor 13 (P2RY13).